A 71-amino-acid polypeptide reads, in one-letter code: UPF0346 protein Bcer98_1690 (71 aa).

Belongs to the UPF0346 family.

In Bacillus cytotoxicus (strain DSM 22905 / CIP 110041 / 391-98 / NVH 391-98), this protein is UPF0346 protein Bcer98_1690.